A 336-amino-acid polypeptide reads, in one-letter code: Ketol-acid reductoisomerase (NADP(+)) (336 aa).

The KARI N-terminal Rossmann domain occupies 1 to 182 (MAVIYYDKDA…GVTRAGVIET (182 aa)). Residues 25-28 (FGSQ), arginine 48, serine 51, serine 53, and 83-86 (DEHQ) each bind NADP(+). Residue histidine 108 is part of the active site. Glycine 134 is a binding site for NADP(+). One can recognise a KARI C-terminal knotted domain in the interval 183–328 (TFKEETETDL…KELRKMMPWL (146 aa)). Aspartate 191, glutamate 195, glutamate 227, and glutamate 231 together coordinate Mg(2+). Serine 252 is a binding site for substrate.

It belongs to the ketol-acid reductoisomerase family. Mg(2+) serves as cofactor.

It carries out the reaction (2R)-2,3-dihydroxy-3-methylbutanoate + NADP(+) = (2S)-2-acetolactate + NADPH + H(+). It catalyses the reaction (2R,3R)-2,3-dihydroxy-3-methylpentanoate + NADP(+) = (S)-2-ethyl-2-hydroxy-3-oxobutanoate + NADPH + H(+). It functions in the pathway amino-acid biosynthesis; L-isoleucine biosynthesis; L-isoleucine from 2-oxobutanoate: step 2/4. It participates in amino-acid biosynthesis; L-valine biosynthesis; L-valine from pyruvate: step 2/4. Its function is as follows. Involved in the biosynthesis of branched-chain amino acids (BCAA). Catalyzes an alkyl-migration followed by a ketol-acid reduction of (S)-2-acetolactate (S2AL) to yield (R)-2,3-dihydroxy-isovalerate. In the isomerase reaction, S2AL is rearranged via a Mg-dependent methyl migration to produce 3-hydroxy-3-methyl-2-ketobutyrate (HMKB). In the reductase reaction, this 2-ketoacid undergoes a metal-dependent reduction by NADPH to yield (R)-2,3-dihydroxy-isovalerate. This is Ketol-acid reductoisomerase (NADP(+)) from Thermotoga neapolitana (strain ATCC 49049 / DSM 4359 / NBRC 107923 / NS-E).